A 198-amino-acid chain; its full sequence is Putative pseudouridine methyltransferase (198 aa).

The S-adenosyl-L-methionine site is built by methionine 132 and cysteine 186.

The protein belongs to the methyltransferase superfamily. TrmY family.

The protein localises to the cytoplasm. In Shewanella baltica (strain OS223), this protein is Putative pseudouridine methyltransferase.